Here is a 473-residue protein sequence, read N- to C-terminus: Adenosylhomocysteinase (473 aa).

Substrate is bound by residues threonine 64, aspartate 139, and glutamate 199. Residue 200 to 202 (TTT) participates in NAD(+) binding. 2 residues coordinate substrate: lysine 229 and aspartate 233. Residues asparagine 234, 263–268 (GYGDVG), glutamate 286, asparagine 321, 342–344 (IGH), and asparagine 387 each bind NAD(+).

The protein belongs to the adenosylhomocysteinase family. Requires NAD(+) as cofactor.

The protein resides in the cytoplasm. The catalysed reaction is S-adenosyl-L-homocysteine + H2O = L-homocysteine + adenosine. It participates in amino-acid biosynthesis; L-homocysteine biosynthesis; L-homocysteine from S-adenosyl-L-homocysteine: step 1/1. May play a key role in the regulation of the intracellular concentration of adenosylhomocysteine. This Paraburkholderia xenovorans (strain LB400) protein is Adenosylhomocysteinase.